The sequence spans 268 residues: Zinc transporter ZupT (268 aa).

The next 8 helical transmembrane spans lie at 6–26 (IIFA…GGVI), 37–57 (FLAG…FVEI), 73–93 (GGNW…AVID), 126–146 (VLTA…TFVA), 153–173 (IAIP…IAVA), 189–209 (WATL…ILLM), 211–231 (FLGP…MVFI), and 248–268 (TAIY…LLFI). 2 residues coordinate Fe(2+): asparagine 136 and glutamate 139. Zn(2+) contacts are provided by glutamate 139 and histidine 164. The Fe(2+) site is built by asparagine 165, glutamate 168, and glutamate 197. Glutamate 168 is a Zn(2+) binding site.

Belongs to the ZIP transporter (TC 2.A.5) family. ZupT subfamily.

The protein resides in the cell membrane. It catalyses the reaction Zn(2+)(in) = Zn(2+)(out). In terms of biological role, mediates zinc uptake. May also transport other divalent cations. This Corynebacterium efficiens (strain DSM 44549 / YS-314 / AJ 12310 / JCM 11189 / NBRC 100395) protein is Zinc transporter ZupT.